A 457-amino-acid polypeptide reads, in one-letter code: Paired box protein Pax-8 (457 aa).

A DNA-binding region (paired) is located at residues 9–135; that stretch reads GHGGLNQLGG…SSINRIIRTK (127 aa). A PAI subdomain region spans residues 12–68; the sequence is GLNQLGGAFVNGRPLPEVVRQRIVDLAHQGVRPCDISRQLRVSHGCVSKILGRYYET. Residues 87–135 form an RED subdomain region; the sequence is KVVEKIGDYKRQNPTMFAWEIRDRLLAEGVCDNDTVPSVSSINRIIRTK. Residues 159-182 are compositionally biased toward polar residues; it reads LIPSSAVTPPESPQSDSLGSTYSI. Positions 159–226 are disordered; sequence LIPSSAVTPP…SSGPRKHLRT (68 aa). Position 304 is a phosphoserine (serine 304).

As to quaternary structure, interacts with WWTR1.

The protein resides in the nucleus. Functionally, thought to encode a transcription factor. It may have a role in kidney cell differentiation. May play a regulatory role in mammalian development. This is Paired box protein Pax-8 (Pax8) from Rattus norvegicus (Rat).